Here is a 344-residue protein sequence, read N- to C-terminus: MLTLGLESSCDETACALVDAKGHIMANVVFSQQDHVAYGGIVPELASRAHLRVFPSVVDSALKESGVSLEDIDLIAVTHTPGLIGSLAIGVNFAKGLAIGCQKPIIGVNHVEAHLYAAYMEAENVEFPALGLAVSGAHTAMFLMEDPLTYKLIGKSRDDAIGETFDKVARFLGLPYPGGSLIEKLASCGCEESYSFSPSKVPGCDLSFSGLKTAVLYAIKGNNSNSRTPLPELSEAEKSDIAASFQRAAFTSIAQKLPNIVKKISCRSILVGGGVASNKYFQNLLKNTLNLPLYFPSSKLCTDNAAMIAGLGRELFLSDKSTIGIHPCARYHWESISASLSPLP.

Fe cation is bound by residues His110 and His114. Substrate-binding positions include 133-137, Asp166, Gly179, and Asn278; that span reads AVSGA. Fe cation is bound at residue Asp303.

This sequence belongs to the KAE1 / TsaD family. The cofactor is Fe(2+).

It localises to the cytoplasm. It catalyses the reaction L-threonylcarbamoyladenylate + adenosine(37) in tRNA = N(6)-L-threonylcarbamoyladenosine(37) in tRNA + AMP + H(+). Its function is as follows. Required for the formation of a threonylcarbamoyl group on adenosine at position 37 (t(6)A37) in tRNAs that read codons beginning with adenine. Is involved in the transfer of the threonylcarbamoyl moiety of threonylcarbamoyl-AMP (TC-AMP) to the N6 group of A37, together with TsaE and TsaB. TsaD likely plays a direct catalytic role in this reaction. The protein is tRNA N6-adenosine threonylcarbamoyltransferase of Chlamydia caviae (strain ATCC VR-813 / DSM 19441 / 03DC25 / GPIC) (Chlamydophila caviae).